A 370-amino-acid polypeptide reads, in one-letter code: Protein Mut11 (370 aa).

Residues 1 to 22 (MARGPGDTDMDEASADAAIPSS) are disordered. WD repeat units lie at residues 38-77 (GHTKAVAAVKFSPDGSLLASGSADRTVALWDAATGARVNT), 80-119 (GHSCGVSDVAWNPNGRYLATAADDHSLKLWDAETGACLRT), 122-162 (GHTN…CLRE), 165-204 (AHSDPVTSAAFSYDGSMVVTSSLDGLIRLWDTQTGHCLKT), 208-247 (RDSPPVSFAAFTPNAKYVLCNTLDGRAKLWDYAAGRTRRT), 262-301 (GFLGGSSSASFDLGCSMVVTGSEDGSLAAYDISTGHVVGR), and 329-370 (GHTA…PAAA).

Belongs to the WD repeat WDR5/wds family.

The protein resides in the nucleus. In terms of biological role, part of a complex involved in 'Lys-4' histone H3 methylation. The sequence is that of Protein Mut11 (Mut11) from Chlamydomonas reinhardtii (Chlamydomonas smithii).